Reading from the N-terminus, the 301-residue chain is Ribosomal RNA small subunit methyltransferase A (301 aa).

Residues asparagine 23, isoleucine 25, glycine 50, glutamate 72, aspartate 97, and asparagine 149 each contribute to the S-adenosyl-L-methionine site.

The protein belongs to the class I-like SAM-binding methyltransferase superfamily. rRNA adenine N(6)-methyltransferase family. RsmA subfamily.

It is found in the cytoplasm. It catalyses the reaction adenosine(1518)/adenosine(1519) in 16S rRNA + 4 S-adenosyl-L-methionine = N(6)-dimethyladenosine(1518)/N(6)-dimethyladenosine(1519) in 16S rRNA + 4 S-adenosyl-L-homocysteine + 4 H(+). Functionally, specifically dimethylates two adjacent adenosines (A1518 and A1519) in the loop of a conserved hairpin near the 3'-end of 16S rRNA in the 30S particle. May play a critical role in biogenesis of 30S subunits. This Rickettsia peacockii (strain Rustic) protein is Ribosomal RNA small subunit methyltransferase A.